A 493-amino-acid polypeptide reads, in one-letter code: Leucine-rich repeat-containing protein 14 (493 aa).

The LRR 1; degenerate repeat unit spans residues 111–146; the sequence is KHTLRVLDMTGLLDDGVEQDPGTMSMWDCTAAVART. The stretch at 194 to 218 is one LRR 2; degenerate repeat; that stretch reads RLCCRDLRAEDLPMRNTVALLQLLD. One copy of the LRR 3; degenerate repeat lies at 219–246; it reads AGCLRRIDLRFNNLGLRGLSVIIPHVAR. Residues 247–282 form an LRR 4; degenerate repeat; it reads FQHLASLRLHYVHGDSRQPSVDGEDNFRYFLAQMGR. LRR repeat units follow at residues 283–307, 308–339, 340–360, 364–391, and 392–416; these read FICLRELSIGSSLLSGRLDQLLSTL, QRPLESLELAFCALLPEDLRFLAQSSHAAHLK, KLDLSGNDLSGNQLTPFQGLL, AATLLHLELTECQIADAQLLATLPTLTR, and CASLRYLGLYGNPLSMAGLKELLRD.

It belongs to the PRAME family. LRRC14 subfamily. As to quaternary structure, interacts with IKBKB; disrupts IKBKB-IKBKG interaction preventing I-kappa-B-kinase (IKK) core complex formation and leading to a decrease of IKBKB phosphorylation and NF-kappaB activation. Interacts with CHUK.

The protein localises to the cytoplasm. Negatively regulates Toll-like receptor-mediated NF-kappa-B signaling by disrupting IKK core complex formation through interaction with IKBKB. The sequence is that of Leucine-rich repeat-containing protein 14 from Rattus norvegicus (Rat).